The primary structure comprises 112 residues: Photosystem II reaction center Psb28 protein (112 aa).

The protein belongs to the Psb28 family. In terms of assembly, part of the photosystem II complex.

The protein resides in the cellular thylakoid membrane. In Synechococcus elongatus (strain ATCC 33912 / PCC 7942 / FACHB-805) (Anacystis nidulans R2), this protein is Photosystem II reaction center Psb28 protein.